Here is a 91-residue protein sequence, read N- to C-terminus: Protein LURE 1.3 (91 aa).

Residues 1–20 (MKLPFIFLITLLIFVSSCTS) form the signal peptide. Asparagine 24 carries N-linked (GlcNAc...) asparagine glycosylation. 3 disulfides stabilise this stretch: cysteine 59/cysteine 76, cysteine 62/cysteine 83, and cysteine 66/cysteine 85. Residues 68-88 (RRGKYIRTCSFERKLCRCSIS) form a PRK6 binding region.

This sequence belongs to the DEFL family. In terms of assembly, binds to PRK6 LRRs. As to expression, expressed in the pistil. Detected exclusively in the synergid cells.

The protein resides in the secreted. In terms of biological role, pollen tube attractants guiding pollen tubes to the ovular micropyle. Attracts pollen tubes from both A.thaliana and A.lyrata. The chain is Protein LURE 1.3 from Arabidopsis thaliana (Mouse-ear cress).